A 140-amino-acid chain; its full sequence is Large-conductance mechanosensitive channel (140 aa).

The next 2 membrane-spanning stretches (helical) occupy residues 16-36 (VVDL…VDSI) and 86-106 (GSFL…FLMV).

It belongs to the MscL family. In terms of assembly, homopentamer.

The protein localises to the cell inner membrane. Its function is as follows. Channel that opens in response to stretch forces in the membrane lipid bilayer. May participate in the regulation of osmotic pressure changes within the cell. The polypeptide is Large-conductance mechanosensitive channel (Anaeromyxobacter sp. (strain K)).